We begin with the raw amino-acid sequence, 660 residues long: Epithelial sodium channel subunit gamma (660 aa).

Over 1 to 55 (MSKSGKKLTQKLKKNLPVTGPQAPTLYELMQWYCLNTNTHGCRRIVVSKGRLRRW) the chain is Cytoplasmic. The helical transmembrane segment at 56-76 (IWISLTLCAVAVIFWQCALLL) threads the bilayer. Residues 77–537 (MSYYSVSASI…VTLLSNFGGQ (461 aa)) are Extracellular-facing. Cystine bridges form between C101–C286, C209–C217, C263–C270, C375–C460, C397–C456, C401–C452, C410–C437, and C412–C426. The helical transmembrane segment at 538–558 (LGLWMSCSMICVLEIIEVFFI) threads the bilayer. Over 559-660 (DSFWVVLRQR…IDSDEDVERL (102 aa)) the chain is Cytoplasmic.

It belongs to the amiloride-sensitive sodium channel (TC 1.A.6) family. SCNN1G subfamily. Component of the heterotrimeric epithelial sodium channel (ENaC) composed of an alpha/SCNN1A, a beta/SCNN1B and a gamma/SCNN1G subunit.

The protein localises to the apical cell membrane. It carries out the reaction Na(+)(in) = Na(+)(out). With respect to regulation, originally identified and characterized by its inhibition by the diuretic drug amiloride. In terms of biological role, this is one of the three pore-forming subunits of the heterotrimeric epithelial sodium channel (ENaC), a critical regulator of sodium balance and fluid homeostasis. ENaC operates in epithelial tissues, where it mediates the electrodiffusion of sodium ions from extracellular fluid through the apical membrane of cells, with water following osmotically. The chain is Epithelial sodium channel subunit gamma (scnn1g-a) from Xenopus laevis (African clawed frog).